Consider the following 360-residue polypeptide: Chorismate synthase (360 aa).

2 residues coordinate NADP(+): Arg-48 and Arg-54. FMN contacts are provided by residues 125 to 127 (RSS), 246 to 247 (NA), Gly-286, 301 to 305 (KPTSS), and Arg-327.

This sequence belongs to the chorismate synthase family. As to quaternary structure, homotetramer. The cofactor is FMNH2.

The catalysed reaction is 5-O-(1-carboxyvinyl)-3-phosphoshikimate = chorismate + phosphate. The protein operates within metabolic intermediate biosynthesis; chorismate biosynthesis; chorismate from D-erythrose 4-phosphate and phosphoenolpyruvate: step 7/7. Catalyzes the anti-1,4-elimination of the C-3 phosphate and the C-6 proR hydrogen from 5-enolpyruvylshikimate-3-phosphate (EPSP) to yield chorismate, which is the branch point compound that serves as the starting substrate for the three terminal pathways of aromatic amino acid biosynthesis. This reaction introduces a second double bond into the aromatic ring system. The sequence is that of Chorismate synthase from Haemophilus ducreyi (strain 35000HP / ATCC 700724).